We begin with the raw amino-acid sequence, 317 residues long: Uridine phosphorylase 2 (317 aa).

Phosphate is bound by residues glycine 66, arginine 100, and arginine 144–threonine 147. An intrachain disulfide couples cysteine 95 to cysteine 102. Residues serine 148–glycine 149 and glutamine 223–arginine 225 each bind uridine.

The protein belongs to the PNP/UDP phosphorylase family. In terms of assembly, homodimer. In terms of tissue distribution, predominantly expressed in kidney.

The enzyme catalyses uridine + phosphate = alpha-D-ribose 1-phosphate + uracil. It carries out the reaction 2'-deoxyuridine + phosphate = 2-deoxy-alpha-D-ribose 1-phosphate + uracil. It participates in pyrimidine metabolism; UMP biosynthesis via salvage pathway; uracil from uridine (phosphorylase route): step 1/1. Its activity is regulated as follows. A conditional disulfide bridge can form within the protein that dislocates a critical phosphate-coordinating arginine Arg-100 away from the active site, disabling the enzyme. Functionally, catalyzes the reversible phosphorylytic cleavage of uridine to uracil and ribose-1-phosphate which can then be utilized as carbon and energy sources or in the rescue of pyrimidine bases for nucleotide synthesis. Shows broad substrate specificity and can also accept deoxyuridine and other analogous compounds. This Homo sapiens (Human) protein is Uridine phosphorylase 2.